A 127-amino-acid chain; its full sequence is Multifunctional methyltransferase subunit trm112 (127 aa).

The 122-residue stretch at 2–123 (KVMTLNFLTC…KNGVANFLLP (122 aa)) folds into the TRM112 domain.

Belongs to the TRM112 family. In terms of assembly, heterodimer of mtq2-rmt-1/trm112, forming the eRF1 methyltransferase. Rmt-1/trm112 is necessary for the solubility and activity of the catalytic subunit mtq2. Interacts with trm11; required for full tRNA methyltransferase activity. Interacts with bud23; required for full rRNA methyltransferase activity.

The protein localises to the cytoplasm. The protein resides in the nucleus. Acts as an activator of both rRNA/tRNA and protein methyltransferases. Together with methyltransferase mtq2, required for the methylation of eRF1 on 'Gln-182'. Together with methyltransferase trm11, required for the formation of 2-methylguanosine at position 10 (m2G10) in tRNA. Together with methyltransferase bud23, required for the formation of a 7-methylguanine in 18S rRNA. Involved in biogenesis of both 40S and 60S ribosomal subunits. The sequence is that of Multifunctional methyltransferase subunit trm112 (rmt-1) from Neurospora crassa (strain ATCC 24698 / 74-OR23-1A / CBS 708.71 / DSM 1257 / FGSC 987).